Here is a 224-residue protein sequence, read N- to C-terminus: Response regulator protein GraR (224 aa).

The Response regulatory domain maps to 2 to 115 (DILLVEDDMT…VLIAKLQAIY (114 aa)). The residue at position 51 (Asp-51) is a 4-aspartylphosphate. Positions 126-224 (KRVLSWQDAI…KIGKGYMAHG (99 aa)) form a DNA-binding region, ompR/PhoB-type.

In terms of processing, phosphorylated by GraS.

The protein resides in the cytoplasm. Its function is as follows. Member of the two-component regulatory system GraR/GraS involved in resistance against cationic antimicrobial peptides (CAMPs). This Staphylococcus saprophyticus subsp. saprophyticus (strain ATCC 15305 / DSM 20229 / NCIMB 8711 / NCTC 7292 / S-41) protein is Response regulator protein GraR (graR).